A 387-amino-acid polypeptide reads, in one-letter code: Phosphoglycerate kinase (387 aa).

Residues 21-23 (DLN), R36, 59-62 (HLGR), R113, and R146 contribute to the substrate site. ATP contacts are provided by residues K197, E314, and 340 to 343 (GGDT).

The protein belongs to the phosphoglycerate kinase family. As to quaternary structure, monomer.

The protein localises to the cytoplasm. The enzyme catalyses (2R)-3-phosphoglycerate + ATP = (2R)-3-phospho-glyceroyl phosphate + ADP. Its pathway is carbohydrate degradation; glycolysis; pyruvate from D-glyceraldehyde 3-phosphate: step 2/5. This is Phosphoglycerate kinase from Enterobacter sp. (strain 638).